The chain runs to 124 residues: MNHPSELKYARTHEWVKIEGDLVITGITDHAQDELGDLVYVETPEVGSQVTAGEQAGVVESVKTASDIHAPVSGTVVEVNTDLEDDPDFVNEDPYGKGWIYKIKPDNIADVEKLLTNAEYEAGL.

In terms of domain architecture, Lipoyl-binding spans L22 to K104. K63 carries the post-translational modification N6-lipoyllysine.

It belongs to the GcvH family. In terms of assembly, the glycine cleavage system is composed of four proteins: P, T, L and H. The cofactor is (R)-lipoate.

The glycine cleavage system catalyzes the degradation of glycine. The H protein shuttles the methylamine group of glycine from the P protein to the T protein. This Acinetobacter baumannii (strain ACICU) protein is Glycine cleavage system H protein.